The primary structure comprises 436 residues: Adenylosuccinate synthetase (436 aa).

GTP-binding positions include 13 to 19 (GDEGKGK) and 41 to 43 (GHT). The active-site Proton acceptor is Asp14. Asp14 and Gly41 together coordinate Mg(2+). Residues 14–17 (DEGK), 39–42 (NAGH), Thr130, Arg144, Gln225, Thr240, and Arg304 each bind IMP. The active-site Proton donor is His42. 300–306 (ATTGRSR) serves as a coordination point for substrate. Residues Arg306, 332–334 (KLD), and 415–417 (STG) each bind GTP.

It belongs to the adenylosuccinate synthetase family. As to quaternary structure, homodimer. The cofactor is Mg(2+).

The protein resides in the cytoplasm. The enzyme catalyses IMP + L-aspartate + GTP = N(6)-(1,2-dicarboxyethyl)-AMP + GDP + phosphate + 2 H(+). It participates in purine metabolism; AMP biosynthesis via de novo pathway; AMP from IMP: step 1/2. Plays an important role in the de novo pathway of purine nucleotide biosynthesis. Catalyzes the first committed step in the biosynthesis of AMP from IMP. The protein is Adenylosuccinate synthetase of Hamiltonella defensa subsp. Acyrthosiphon pisum (strain 5AT).